A 535-amino-acid chain; its full sequence is Probable galacturonosyltransferase 12 (535 aa).

The Cytoplasmic portion of the chain corresponds to Met1–Met37. Residues Val38–Val58 traverse the membrane as a helical; Signal-anchor for type II membrane protein segment. At Asp59–Ser535 the chain is on the lumenal side. 2 N-linked (GlcNAc...) asparagine glycosylation sites follow: Asn397 and Asn430.

The protein belongs to the glycosyltransferase 8 family. In terms of tissue distribution, highly expressed in stems. Detected in roots, inflorescences, siliques, and leaves. Expressed in cells undergoing secondary wall thickening, including interfascicular fibers and primary and secondary xylem.

Its subcellular location is the golgi apparatus membrane. It functions in the pathway glycan metabolism; pectin biosynthesis. Involved in pectin assembly and/or distribution, and in the synthesis of secondary wall glucuronoxylan. Probably involved in the synthesis of the glycosyl sequence at the glucuronoxylan reducing end. May be involved in synthesis of a complex glycan primer for xylan synthesis. This chain is Probable galacturonosyltransferase 12 (GAUT12), found in Arabidopsis thaliana (Mouse-ear cress).